Reading from the N-terminus, the 137-residue chain is Putative pre-16S rRNA nuclease (137 aa).

This sequence belongs to the YqgF nuclease family.

The protein localises to the cytoplasm. Functionally, could be a nuclease involved in processing of the 5'-end of pre-16S rRNA. This chain is Putative pre-16S rRNA nuclease, found in Clostridium botulinum (strain 657 / Type Ba4).